We begin with the raw amino-acid sequence, 338 residues long: MQFIDEVKIHVQSGHGGAGCVSFRREKFIPFGGPNGGDGGRGGDVIFRVDSNLSTLLDLRYRPHLKAGSGKNGMGKDRHGAGGEDLVIPVPPGTIIKDAETGEILADLVTAGEEIVLLKGGRGGQGNARFATSTNRAPKFAQPGEPEEQRWLRLELKLLADVGLLGFPNVGKSSFITRVSAARPKIADYPFTTLKPNLGVVPYKNYRSFVIADIPGIIEGASEGAGLGHRFLKHVERTTVLLHVLDLSWMPDRDPIREYEALNRELALFSPELADKRQIVVVNKMDLPAVRENLPAVLPWFRERGLAVFPLSAATGEGISPLLDEIARSLWGKDEEEW.

In terms of domain architecture, Obg spans 1 to 159; it reads MQFIDEVKIH…RWLRLELKLL (159 aa). The OBG-type G domain maps to 160-331; the sequence is ADVGLLGFPN…LLDEIARSLW (172 aa). Residues 166-173, 191-195, 213-216, 283-286, and 312-314 contribute to the GTP site; these read GFPNVGKS, FTTLK, DIPG, NKMD, and SAA. Mg(2+) contacts are provided by Ser173 and Thr193.

The protein belongs to the TRAFAC class OBG-HflX-like GTPase superfamily. OBG GTPase family. In terms of assembly, monomer. It depends on Mg(2+) as a cofactor.

It is found in the cytoplasm. An essential GTPase which binds GTP, GDP and possibly (p)ppGpp with moderate affinity, with high nucleotide exchange rates and a fairly low GTP hydrolysis rate. Plays a role in control of the cell cycle, stress response, ribosome biogenesis and in those bacteria that undergo differentiation, in morphogenesis control. This chain is GTPase Obg, found in Geobacter sulfurreducens (strain ATCC 51573 / DSM 12127 / PCA).